A 193-amino-acid polypeptide reads, in one-letter code: Small ribosomal subunit protein eS1 (193 aa).

This sequence belongs to the eukaryotic ribosomal protein eS1 family.

The protein is Small ribosomal subunit protein eS1 of Sulfurisphaera tokodaii (strain DSM 16993 / JCM 10545 / NBRC 100140 / 7) (Sulfolobus tokodaii).